Here is a 410-residue protein sequence, read N- to C-terminus: Polyadenylation and cleavage factor homolog 5 (410 aa).

Residues 1 to 17 (MASNGSFSAQRNANAGT) are compositionally biased toward polar residues. The interval 1 to 32 (MASNGSFSAQRNANAGTTMKRRNDNRGYGGGI) is disordered. The stretch at 191 to 214 (SKELTDLLSLLNNEKEKKTSEASN) forms a coiled coil. Residues 247-269 (RQCTSCGVRFKCQEEHSKHMDWH) form a C2H2-type zinc finger.

Forms a complex with cleavage and polyadenylation specificity factor (CPSF) subunits CSTF77, CLPS3, PCFS4 and PCFS1.

The protein resides in the nucleus. This is Polyadenylation and cleavage factor homolog 5 from Arabidopsis thaliana (Mouse-ear cress).